We begin with the raw amino-acid sequence, 372 residues long: 3,5-dihydroxyphenylacetyl-CoA synthase (372 aa).

The active site involves Cys-160.

The protein belongs to the thiolase-like superfamily. Chalcone/stilbene synthases family.

The enzyme catalyses 4 malonyl-CoA + 4 H(+) = (3,5-dihydroxyphenyl)acetyl-CoA + 4 CO2 + 3 CoA + H2O. It participates in antibiotic biosynthesis. Involved in the biosynthesis of the nonproteinogenic amino acid monomer (S)-3,5-dihydroxyphenylglycine (Dpg) responsible of the production of balhimycin antibiotic. Catalyzes the Claisen condensation of four molecules of malonyl-CoA to yield 3,5-dihydroxyphenylacetyl-CoA (DPA-CoA) and three free coenzyme A (CoA). DpgA requires the presence of the dehydratases DpgB and DpgD to facilitate the aromatization of the DPA-S-DgpA or DPA-S-CoA intermediate. This Amycolatopsis balhimycina protein is 3,5-dihydroxyphenylacetyl-CoA synthase.